We begin with the raw amino-acid sequence, 860 residues long: DNA primase (860 aa).

A CHC2-type zinc finger spans residues 804-842; sequence CLNRQHRGNRDNVLVYIQLKADGNRLILILWSTCFATKC.

The protein belongs to the herpesviridae DNA primase family. Associates with the helicase and the primase-associated factor to form the helicase-primase factor.

The protein localises to the host nucleus. In terms of biological role, essential component of the helicase/primase complex. Unwinds the DNA at the replication forks and generates single-stranded DNA for both leading and lagging strand synthesis. The primase initiates primer synthesis and thereby produces large amount of short RNA primers on the lagging strand that the polymerase elongates using dNTPs. The protein is DNA primase (U43) of Homo sapiens (Human).